The sequence spans 377 residues: tRNA-specific 2-thiouridylase MnmA (377 aa).

Residues 18–25 and M44 each bind ATP; that span reads GMSGGVDS. Positions 104–106 are interaction with target base in tRNA; it reads NPD. Catalysis depends on C109, which acts as the Nucleophile. C109 and C209 are oxidised to a cystine. G134 lines the ATP pocket. The tract at residues 159–161 is interaction with tRNA; it reads KDQ. C209 serves as the catalytic Cysteine persulfide intermediate. The segment at 324–325 is interaction with tRNA; it reads RY.

It belongs to the MnmA/TRMU family.

The protein resides in the cytoplasm. It carries out the reaction S-sulfanyl-L-cysteinyl-[protein] + uridine(34) in tRNA + AH2 + ATP = 2-thiouridine(34) in tRNA + L-cysteinyl-[protein] + A + AMP + diphosphate + H(+). Its function is as follows. Catalyzes the 2-thiolation of uridine at the wobble position (U34) of tRNA, leading to the formation of s(2)U34. The polypeptide is tRNA-specific 2-thiouridylase MnmA (Photobacterium profundum (strain SS9)).